Consider the following 394-residue polypeptide: Chorismate synthase (394 aa).

Positions 40 and 46 each coordinate NADP(+). FMN-binding positions include 135–137 (RAS), 255–256 (QA), Gly302, 317–321 (KPISS), and Arg343.

This sequence belongs to the chorismate synthase family. In terms of assembly, homotetramer. The cofactor is FMNH2.

It catalyses the reaction 5-O-(1-carboxyvinyl)-3-phosphoshikimate = chorismate + phosphate. It participates in metabolic intermediate biosynthesis; chorismate biosynthesis; chorismate from D-erythrose 4-phosphate and phosphoenolpyruvate: step 7/7. Functionally, catalyzes the anti-1,4-elimination of the C-3 phosphate and the C-6 proR hydrogen from 5-enolpyruvylshikimate-3-phosphate (EPSP) to yield chorismate, which is the branch point compound that serves as the starting substrate for the three terminal pathways of aromatic amino acid biosynthesis. This reaction introduces a second double bond into the aromatic ring system. This chain is Chorismate synthase, found in Parafrankia sp. (strain EAN1pec).